The chain runs to 126 residues: Autophagy-related protein 8-like protein DDB_G0290491 (126 aa).

Glycine 123 is lipidated: Phosphatidylethanolamine amidated glycine. Residues 124–126 (SDI) constitute a propeptide, removed in mature form.

Belongs to the ATG8 family.

The protein localises to the membrane. In Dictyostelium discoideum (Social amoeba), this protein is Autophagy-related protein 8-like protein DDB_G0290491.